A 183-amino-acid polypeptide reads, in one-letter code: Holliday junction branch migration complex subunit RuvA (183 aa).

The domain I stretch occupies residues 1–63 (MIVGLIGVVE…EDAHLLYGFL (63 aa)). The domain II stretch occupies residues 64 to 139 (EESEKILFER…FFIQDENRPA (76 aa)). Position 139 (Ala-139) is a region of interest, flexible linker. A domain III region spans residues 139–183 (ARNEVFLALESLGFKSAEINPVLKTLKPHLSIEAAIKEALQQLRS).

The protein belongs to the RuvA family. In terms of assembly, homotetramer. Forms an RuvA(8)-RuvB(12)-Holliday junction (HJ) complex. HJ DNA is sandwiched between 2 RuvA tetramers; dsDNA enters through RuvA and exits via RuvB. An RuvB hexamer assembles on each DNA strand where it exits the tetramer. Each RuvB hexamer is contacted by two RuvA subunits (via domain III) on 2 adjacent RuvB subunits; this complex drives branch migration. In the full resolvosome a probable DNA-RuvA(4)-RuvB(12)-RuvC(2) complex forms which resolves the HJ.

It is found in the cytoplasm. Functionally, the RuvA-RuvB-RuvC complex processes Holliday junction (HJ) DNA during genetic recombination and DNA repair, while the RuvA-RuvB complex plays an important role in the rescue of blocked DNA replication forks via replication fork reversal (RFR). RuvA specifically binds to HJ cruciform DNA, conferring on it an open structure. The RuvB hexamer acts as an ATP-dependent pump, pulling dsDNA into and through the RuvAB complex. HJ branch migration allows RuvC to scan DNA until it finds its consensus sequence, where it cleaves and resolves the cruciform DNA. The sequence is that of Holliday junction branch migration complex subunit RuvA from Helicobacter pylori (strain J99 / ATCC 700824) (Campylobacter pylori J99).